Reading from the N-terminus, the 153-residue chain is Endoribonuclease YbeY (153 aa).

Zn(2+)-binding residues include His-118, His-122, and His-128.

This sequence belongs to the endoribonuclease YbeY family. The cofactor is Zn(2+).

It is found in the cytoplasm. In terms of biological role, single strand-specific metallo-endoribonuclease involved in late-stage 70S ribosome quality control and in maturation of the 3' terminus of the 16S rRNA. The chain is Endoribonuclease YbeY from Staphylococcus haemolyticus (strain JCSC1435).